Consider the following 423-residue polypeptide: Serine--tRNA ligase 2 (423 aa).

231–233 (TAE) lines the L-serine pocket. 262–264 (RSE) contributes to the ATP binding site. Position 285 (E285) interacts with L-serine. 349-352 (EISS) contributes to the ATP binding site. S384 is a binding site for L-serine.

The protein belongs to the class-II aminoacyl-tRNA synthetase family. Type-1 seryl-tRNA synthetase subfamily. As to quaternary structure, homodimer. The tRNA molecule binds across the dimer.

It localises to the cytoplasm. It catalyses the reaction tRNA(Ser) + L-serine + ATP = L-seryl-tRNA(Ser) + AMP + diphosphate + H(+). It carries out the reaction tRNA(Sec) + L-serine + ATP = L-seryl-tRNA(Sec) + AMP + diphosphate + H(+). It functions in the pathway aminoacyl-tRNA biosynthesis; selenocysteinyl-tRNA(Sec) biosynthesis; L-seryl-tRNA(Sec) from L-serine and tRNA(Sec): step 1/1. Catalyzes the attachment of serine to tRNA(Ser). Is also able to aminoacylate tRNA(Sec) with serine, to form the misacylated tRNA L-seryl-tRNA(Sec), which will be further converted into selenocysteinyl-tRNA(Sec). This Enterococcus faecalis (strain ATCC 700802 / V583) protein is Serine--tRNA ligase 2.